The sequence spans 892 residues: Putative VWFA domain-containing protein ORF892 (892 aa).

Residues 109-548 (EEQLQRRPQR…RGYAHGDEDL (440 aa)) form a disordered region. Residues 129-142 (SEVANQRVSRSAEN) are compositionally biased toward polar residues. The span at 143-162 (QGKRGNEEKQQQKTPGKTEE) shows a compositional bias: basic and acidic residues. Residues 169 to 184 (ESGEEGNQQEESGEEQ) show a composition bias toward acidic residues. Basic and acidic residues predominate over residues 185–196 (EGVKGSRSKQRE). A compositionally biased stretch (acidic residues) spans 212-223 (ESGESESEEGQS). 2 stretches are compositionally biased toward low complexity: residues 224 to 238 (SEET…GNQQ) and 271 to 283 (GNGQ…AQNG). Acidic residues predominate over residues 287–300 (GESEGEITESESAS). The span at 301 to 323 (EEQTGSKGKSGQQGEEGQQQSGS) shows a compositional bias: low complexity. Acidic residues-rich tracts occupy residues 324 to 336 (EGEE…ESGE) and 425 to 448 (SESE…ETEE). Low complexity predominate over residues 453–466 (SEAEGTAAEGEVGQ). Polar residues-rich tracts occupy residues 467 to 481 (PSEQ…SGQR) and 512 to 531 (QTGS…QQGE). Basic and acidic residues predominate over residues 536 to 546 (EGGRGYAHGDE). Residues 553-620 (QEINSILQTL…VQKLLKDLNV (68 aa)) adopt a coiled-coil conformation. Residues 723–892 (DFLFVIDSSG…GNIVLKRLVH (170 aa)) enclose the VWFA domain.

The protein is Putative VWFA domain-containing protein ORF892 of Acidianus two-tailed virus (ATV).